The primary structure comprises 134 residues: Profilin (134 aa).

It belongs to the profilin family. In terms of assembly, interacts with host Tpm1. Interacts with protein A25.

It is found in the host cytoplasm. Functionally, participates in either intracellular transport of viral proteins or intercellular spread of the virus. Cellular profilins modulate actin filament dynamics (polymerization and depolymerization) via direct binding to actin through an actin-binding domain as well as by modulation of other actin-binding proteins. In contrast to cellular homologs, the poxvirus profilins seem to bind actin only weakly. The polypeptide is Profilin (Ectromelia virus (strain Moscow) (ECTV)).